Here is a 462-residue protein sequence, read N- to C-terminus: Zinc transporter zipt-7.2 (462 aa).

The chain crosses the membrane as a helical span at residues 2-22; that stretch reads LVKSCIFLSFLAIAAYGQAHL. The segment at 39-134 is disordered; the sequence is HHQGHGHAHG…HGHSHGAESA (96 aa). The segment covering 40 to 51 has biased composition (basic residues); it reads HQGHGHAHGGHG. Residues 65-74 show a composition bias toward low complexity; that stretch reads AAAAEAATAA. The segment covering 75–94 has biased composition (basic and acidic residues); the sequence is AHDHGHAHDHDHGHAHDHGH. Positions 111–120 are enriched in basic residues; that stretch reads HGHAHDHHGH. The segment covering 121 to 132 has biased composition (basic and acidic residues); that stretch reads SHEDHGHSHGAE. A helical transmembrane segment spans residues 161–181; it reads AISATLLISAAPCFILMFIPI. An N-linked (GlcNAc...) asparagine glycan is attached at Asn184. Residues 194-214 traverse the membrane as a helical segment; sequence VLLAFGSGGLLGDAFLHLIPH. The segment at 219–239 is disordered; that stretch reads GDGHGHSHSHGHSHGGGGHSH. Residues 244-264 form a helical membrane-spanning segment; that stretch reads MSVGGWVLGGIIAFLTVEKLV. The tract at residues 270–307 is disordered; that stretch reads EDGHGHSHGHSHGGEKKETKEKDSKDKVAKKEEKPEKD. A compositionally biased stretch (basic and acidic residues) spans 281–307; sequence HGGEKKETKEKDSKDKVAKKEEKPEKD. N-linked (GlcNAc...) asparagine glycosylation occurs at Asn326. A run of 3 helical transmembrane segments spans residues 333–353, 376–396, and 410–430; these read IGAS…TVLV, AMLI…ISLF, and SWVL…SVIP. The N-linked (GlcNAc...) asparagine glycan is linked to Asn435. Residues 441 to 461 form a helical membrane-spanning segment; sequence TVKEIFAILTGIFLMYLIAIY.

This sequence belongs to the ZIP transporter (TC 2.A.5) family. KE4/Catsup subfamily. In terms of tissue distribution, expressed in somatic tissues.

It localises to the membrane. Its function is as follows. Zinc transporter. This Caenorhabditis elegans protein is Zinc transporter zipt-7.2.